The sequence spans 344 residues: MSAQQTRAPLLRRIAPYGAAGLAAIVGVAIWSGTGSQSGADASRTPANAVAADGASAAVRQAALPASAALPAPLVGSSAPRLPLDSGGHLAKVRAVRDFFDYCLTARSELTAAALDALVAREIAAQLDATPAQPEALDVWRRYRAYLDALEKLPDGGAVDKIDPEALQRALDQRASIAHRTLGDWSQPFFGAEQSQQRYDLARLRIVQDRTLTDAQKAERLAALDQQMPADERAARAPAERQRAALDQIAQLQKSGATPDAVRAQLTQSLGADVAARVVQMQQDDASWQSRYADYAAQRAQIDAAGLSQQDRDAQIAALRQRIFTKPGEAVRAAAFDRSAAGTR.

The helical transmembrane segment at 13–35 (RIAPYGAAGLAAIVGVAIWSGTG) threads the bilayer.

It belongs to the lipase chaperone family.

Its subcellular location is the cell inner membrane. May be involved in the folding of the extracellular lipase during its passage through the periplasm. The sequence is that of Lipase chaperone from Burkholderia vietnamiensis (strain G4 / LMG 22486) (Burkholderia cepacia (strain R1808)).